A 377-amino-acid polypeptide reads, in one-letter code: Chaperone protein DnaJ (377 aa).

The J domain occupies 4 to 69; the sequence is DYYEALGVTR…QKRAAYDRFG (66 aa). The CR-type zinc-finger motif lies at 135-213; it reads GKTAQIRVPT…CHGQGRVTQE (79 aa). Residues C148, C151, C165, C168, C187, C190, C201, and C204 each contribute to the Zn(2+) site. CXXCXGXG motif repeat units follow at residues 148-155, 165-172, 187-194, and 201-208; these read CDECSGSG, CTMCSGSG, CPGCNGRG, and CEKCHGQG.

The protein belongs to the DnaJ family. Homodimer. Requires Zn(2+) as cofactor.

It localises to the cytoplasm. Participates actively in the response to hyperosmotic and heat shock by preventing the aggregation of stress-denatured proteins and by disaggregating proteins, also in an autonomous, DnaK-independent fashion. Unfolded proteins bind initially to DnaJ; upon interaction with the DnaJ-bound protein, DnaK hydrolyzes its bound ATP, resulting in the formation of a stable complex. GrpE releases ADP from DnaK; ATP binding to DnaK triggers the release of the substrate protein, thus completing the reaction cycle. Several rounds of ATP-dependent interactions between DnaJ, DnaK and GrpE are required for fully efficient folding. Also involved, together with DnaK and GrpE, in the DNA replication of plasmids through activation of initiation proteins. In Brucella abortus (strain S19), this protein is Chaperone protein DnaJ.